Consider the following 290-residue polypeptide: Protein translocase subunit SecF (290 aa).

The next 6 helical transmembrane spans lie at 15–35 (VFMI…FTKG), 131–151 (KAIL…TVRF), 156–176 (AISA…IFAI), 184–204 (SFIA…IIVF), 234–256 (TLYT…GVVL), and 260–282 (ILAI…SAIL).

This sequence belongs to the SecD/SecF family. SecF subfamily. In terms of assembly, forms a complex with SecD. Part of the essential Sec protein translocation apparatus which comprises SecA, SecYEG and auxiliary proteins SecDF. Other proteins may also be involved.

It localises to the cell inner membrane. Part of the Sec protein translocase complex. Interacts with the SecYEG preprotein conducting channel. SecDF uses the proton motive force (PMF) to complete protein translocation after the ATP-dependent function of SecA. The sequence is that of Protein translocase subunit SecF from Dictyoglomus turgidum (strain DSM 6724 / Z-1310).